The sequence spans 144 residues: Cytochrome c oxidase subunit 4 isoform 1, mitochondrial (144 aa).

Over 1–73 (SVVKSEDFSL…SFAEMNRGSN (73 aa)) the chain is Mitochondrial matrix. K4 is subject to N6-acetyllysine; alternate. The residue at position 4 (K4) is an N6-succinyllysine; alternate. Position 28 is an N6-acetyllysine (K28). A phosphoserine mark is found at S31 and S33. At K35 the chain carries N6-acetyllysine; alternate. N6-succinyllysine; alternate is present on K35. At K42 the chain carries N6-acetyllysine. Residues 74–99 (EWKTVVGGAMFFIGFTALVIMWQKHY) traverse the membrane as a helical segment. The Mitochondrial intermembrane portion of the chain corresponds to 100-144 (VYGPLPQSFDKEWVAKQTKRMLDMKVNPIQGLASKWDYEKNEWKK).

Belongs to the cytochrome c oxidase IV family. Component of the cytochrome c oxidase (complex IV, CIV), a multisubunit enzyme composed of 14 subunits. The complex is composed of a catalytic core of 3 subunits MT-CO1, MT-CO2 and MT-CO3, encoded in the mitochondrial DNA, and 11 supernumerary subunits COX4I, COX5A, COX5B, COX6A, COX6B, COX6C, COX7A, COX7B, COX7C, COX8 and NDUFA4, which are encoded in the nuclear genome. The complex exists as a monomer or a dimer and forms supercomplexes (SCs) in the inner mitochondrial membrane with NADH-ubiquinone oxidoreductase (complex I, CI) and ubiquinol-cytochrome c oxidoreductase (cytochrome b-c1 complex, complex III, CIII), resulting in different assemblies (supercomplex SCI(1)III(2)IV(1) and megacomplex MCI(2)III(2)IV(2)). Interacts with PHB2; the interaction decreases in absence of SPHK2. Interacts with AFG1L. Interacts with ABCB7; this interaction allows the regulation of cellular iron homeostasis and cellular reactive oxygen species (ROS) levels in cardiomyocytes. Interacts with FLVCR2; this interaction occurs in the absence of heme and is disrupted upon heme binding. Interacts with IRGC.

It localises to the mitochondrion inner membrane. It functions in the pathway energy metabolism; oxidative phosphorylation. In terms of biological role, component of the cytochrome c oxidase, the last enzyme in the mitochondrial electron transport chain which drives oxidative phosphorylation. The respiratory chain contains 3 multisubunit complexes succinate dehydrogenase (complex II, CII), ubiquinol-cytochrome c oxidoreductase (cytochrome b-c1 complex, complex III, CIII) and cytochrome c oxidase (complex IV, CIV), that cooperate to transfer electrons derived from NADH and succinate to molecular oxygen, creating an electrochemical gradient over the inner membrane that drives transmembrane transport and the ATP synthase. Cytochrome c oxidase is the component of the respiratory chain that catalyzes the reduction of oxygen to water. Electrons originating from reduced cytochrome c in the intermembrane space (IMS) are transferred via the dinuclear copper A center (CU(A)) of subunit 2 and heme A of subunit 1 to the active site in subunit 1, a binuclear center (BNC) formed by heme A3 and copper B (CU(B)). The BNC reduces molecular oxygen to 2 water molecules using 4 electrons from cytochrome c in the IMS and 4 protons from the mitochondrial matrix. The protein is Cytochrome c oxidase subunit 4 isoform 1, mitochondrial (COX4I1) of Gorilla gorilla gorilla (Western lowland gorilla).